The sequence spans 223 residues: Ribose-5-phosphate isomerase A (223 aa).

Residues 28–31 (TGST), 81–84 (DGAD), and 94–97 (KGGG) contribute to the substrate site. The active-site Proton acceptor is Glu103. Lys121 contacts substrate.

The protein belongs to the ribose 5-phosphate isomerase family. Homodimer.

The catalysed reaction is aldehydo-D-ribose 5-phosphate = D-ribulose 5-phosphate. The protein operates within carbohydrate degradation; pentose phosphate pathway; D-ribose 5-phosphate from D-ribulose 5-phosphate (non-oxidative stage): step 1/1. In terms of biological role, catalyzes the reversible conversion of ribose-5-phosphate to ribulose 5-phosphate. This Ruthia magnifica subsp. Calyptogena magnifica protein is Ribose-5-phosphate isomerase A.